The primary structure comprises 472 residues: Cell division protein FtsP (472 aa).

A signal peptide (tat-type signal) is located at residues Met1 to Ala32.

Belongs to the FtsP family. Post-translationally, predicted to be exported by the Tat system. The position of the signal peptide cleavage has not been experimentally proven.

Its subcellular location is the periplasm. Cell division protein that is required for growth during stress conditions. May be involved in protecting or stabilizing the divisomal assembly under conditions of stress. The polypeptide is Cell division protein FtsP (Edwardsiella tarda (strain FL6-60)).